The primary structure comprises 316 residues: MNPNFLDFEQPIADLQAKIEELRLVGNDNALNISDEISRLQDKSKALTENIFGNLSSWQIAQLARHPKRPYTLDYIGYLFSDFEELHGDRHFADDPAIVGGVARLDGSPVMVIGHQKGREVREKVRRNFGMPRPEGYRKACRLMEMAERFKMPILTFIDTPGAYPGIDAEERGQSEAIAWNLRVMARLKTPIIATVIGEGGSGGALAIGVCDQLNMLQYSTYSVISPEGCASILWKTAEKAPEAAEAMGITAERLKGLGIVDKVIDEPLGGAHRDPASMAESIRGELLTQLKMLQGLEMGELLERRYDRLMSYGAP.

Residues Arg39–Met293 enclose the CoA carboxyltransferase C-terminal domain.

This sequence belongs to the AccA family. In terms of assembly, acetyl-CoA carboxylase is a heterohexamer composed of biotin carboxyl carrier protein (AccB), biotin carboxylase (AccC) and two subunits each of ACCase subunit alpha (AccA) and ACCase subunit beta (AccD).

The protein localises to the cytoplasm. The catalysed reaction is N(6)-carboxybiotinyl-L-lysyl-[protein] + acetyl-CoA = N(6)-biotinyl-L-lysyl-[protein] + malonyl-CoA. It participates in lipid metabolism; malonyl-CoA biosynthesis; malonyl-CoA from acetyl-CoA: step 1/1. Component of the acetyl coenzyme A carboxylase (ACC) complex. First, biotin carboxylase catalyzes the carboxylation of biotin on its carrier protein (BCCP) and then the CO(2) group is transferred by the carboxyltransferase to acetyl-CoA to form malonyl-CoA. In Pseudomonas aeruginosa (strain LESB58), this protein is Acetyl-coenzyme A carboxylase carboxyl transferase subunit alpha.